Reading from the N-terminus, the 295-residue chain is Ribosomal protein L11 methyltransferase (295 aa).

S-adenosyl-L-methionine-binding residues include T138, G161, D183, and N230.

Belongs to the methyltransferase superfamily. PrmA family.

The protein localises to the cytoplasm. It catalyses the reaction L-lysyl-[protein] + 3 S-adenosyl-L-methionine = N(6),N(6),N(6)-trimethyl-L-lysyl-[protein] + 3 S-adenosyl-L-homocysteine + 3 H(+). In terms of biological role, methylates ribosomal protein L11. The sequence is that of Ribosomal protein L11 methyltransferase from Bradyrhizobium diazoefficiens (strain JCM 10833 / BCRC 13528 / IAM 13628 / NBRC 14792 / USDA 110).